The chain runs to 53 residues: uncharacterized protein (53 aa).

A helical transmembrane segment spans residues 26-46 (CYLLFCFLECFLNLFKKCGVF).

The protein belongs to the plectrovirus ORF11 family.

The protein resides in the host membrane. This is an uncharacterized protein from Spiroplasma virus SpV1-R8A2 B (SpV1).